Here is a 559-residue protein sequence, read N- to C-terminus: 2,3-bisphosphoglycerate-independent phosphoglycerate mutase (559 aa).

Mn(2+) contacts are provided by D28 and S81. S81 functions as the Phosphoserine intermediate in the catalytic mechanism. Residues H140, 170-171 (RD), R206, R213, 286-289 (RADR), and K361 each bind substrate. D430, H434, D471, H472, and H501 together coordinate Mn(2+).

This sequence belongs to the BPG-independent phosphoglycerate mutase family. As to quaternary structure, monomer. Mn(2+) is required as a cofactor. In terms of tissue distribution, found ubiquitously in germinating seed.

The protein localises to the cytoplasm. The enzyme catalyses (2R)-2-phosphoglycerate = (2R)-3-phosphoglycerate. Its pathway is carbohydrate degradation; glycolysis; pyruvate from D-glyceraldehyde 3-phosphate: step 3/5. In terms of biological role, catalyzes the interconversion of 2-phosphoglycerate and 3-phosphoglycerate. This chain is 2,3-bisphosphoglycerate-independent phosphoglycerate mutase, found in Nicotiana tabacum (Common tobacco).